An 880-amino-acid polypeptide reads, in one-letter code: Alanine--tRNA ligase (880 aa).

Zn(2+)-binding residues include His565, His569, Cys675, and His679.

The protein belongs to the class-II aminoacyl-tRNA synthetase family. Zn(2+) is required as a cofactor.

The protein resides in the cytoplasm. It carries out the reaction tRNA(Ala) + L-alanine + ATP = L-alanyl-tRNA(Ala) + AMP + diphosphate. Catalyzes the attachment of alanine to tRNA(Ala) in a two-step reaction: alanine is first activated by ATP to form Ala-AMP and then transferred to the acceptor end of tRNA(Ala). Also edits incorrectly charged Ser-tRNA(Ala) and Gly-tRNA(Ala) via its editing domain. This is Alanine--tRNA ligase from Granulibacter bethesdensis (strain ATCC BAA-1260 / CGDNIH1).